The chain runs to 122 residues: MMGVVSTPKVVGRQVYGSLYECDNEVLKDVKRLEEIVKEAAKVGNMTLLDIKSWKIGEGVSVVAIVLESHITIHTWPEYNFATVDVYSCGAHTDPYKAFMYIVNELKAKRYTINEADRSSEF.

S69 serves as the catalytic Schiff-base intermediate with substrate; via pyruvic acid. Position 69 is a pyruvic acid (Ser); by autocatalysis (S69). The active-site Proton acceptor; for processing activity is the H74. The active-site Proton donor; for catalytic activity is C89.

Belongs to the prokaryotic AdoMetDC family. Type 1 subfamily. As to quaternary structure, heterotetramer of two alpha and two beta chains arranged as a dimer of alpha/beta heterodimers. The cofactor is pyruvate. Is synthesized initially as an inactive proenzyme. Formation of the active enzyme involves a self-maturation process in which the active site pyruvoyl group is generated from an internal serine residue via an autocatalytic post-translational modification. Two non-identical subunits are generated from the proenzyme in this reaction, and the pyruvate is formed at the N-terminus of the alpha chain, which is derived from the carboxyl end of the proenzyme. The post-translation cleavage follows an unusual pathway, termed non-hydrolytic serinolysis, in which the side chain hydroxyl group of the serine supplies its oxygen atom to form the C-terminus of the beta chain, while the remainder of the serine residue undergoes an oxidative deamination to produce ammonia and the pyruvoyl group blocking the N-terminus of the alpha chain.

It carries out the reaction S-adenosyl-L-methionine + H(+) = S-adenosyl 3-(methylsulfanyl)propylamine + CO2. It functions in the pathway amine and polyamine biosynthesis; S-adenosylmethioninamine biosynthesis; S-adenosylmethioninamine from S-adenosyl-L-methionine: step 1/1. Catalyzes the decarboxylation of S-adenosylmethionine to S-adenosylmethioninamine (dcAdoMet), the propylamine donor required for the synthesis of the polyamines spermine and spermidine from the diamine putrescine. This Sulfurisphaera tokodaii (strain DSM 16993 / JCM 10545 / NBRC 100140 / 7) (Sulfolobus tokodaii) protein is S-adenosylmethionine decarboxylase proenzyme.